The sequence spans 228 residues: Translation initiation factor 6 (228 aa).

This sequence belongs to the eIF-6 family.

In terms of biological role, binds to the 50S ribosomal subunit and prevents its association with the 30S ribosomal subunit to form the 70S initiation complex. The protein is Translation initiation factor 6 of Thermococcus onnurineus (strain NA1).